Reading from the N-terminus, the 262-residue chain is Type III pantothenate kinase (262 aa).

Position 9–16 (9–16 (DAGNSRIK)) interacts with ATP. Substrate-binding positions include Tyr-96 and 103–106 (GSDR). Residue Asp-105 is the Proton acceptor of the active site. An ATP-binding site is contributed by Thr-129. Thr-189 contributes to the substrate binding site.

Belongs to the type III pantothenate kinase family. Homodimer. NH4(+) is required as a cofactor. The cofactor is K(+).

It localises to the cytoplasm. The catalysed reaction is (R)-pantothenate + ATP = (R)-4'-phosphopantothenate + ADP + H(+). Its pathway is cofactor biosynthesis; coenzyme A biosynthesis; CoA from (R)-pantothenate: step 1/5. In terms of biological role, catalyzes the phosphorylation of pantothenate (Pan), the first step in CoA biosynthesis. In Burkholderia multivorans (strain ATCC 17616 / 249), this protein is Type III pantothenate kinase.